Reading from the N-terminus, the 31-residue chain is Cytochrome b6-f complex subunit 6 (31 aa).

The chain crosses the membrane as a helical span at residues 4–24 (IISYFGLLLATLTFTIVLFVG).

The protein belongs to the PetL family. The 4 large subunits of the cytochrome b6-f complex are cytochrome b6, subunit IV (17 kDa polypeptide, PetD), cytochrome f and the Rieske protein, while the 4 small subunits are PetG, PetL, PetM and PetN. The complex functions as a dimer.

It is found in the plastid. The protein resides in the chloroplast thylakoid membrane. In terms of biological role, component of the cytochrome b6-f complex, which mediates electron transfer between photosystem II (PSII) and photosystem I (PSI), cyclic electron flow around PSI, and state transitions. PetL is important for photoautotrophic growth as well as for electron transfer efficiency and stability of the cytochrome b6-f complex. In Staurastrum punctulatum (Green alga), this protein is Cytochrome b6-f complex subunit 6.